Consider the following 269-residue polypeptide: Undecaprenyl-diphosphatase (269 aa).

The next 7 helical transmembrane spans lie at 42-62 (WDTF…ALYF), 83-103 (LTVL…HGVI), 110-130 (PYLP…LLVV), 142-162 (GMAL…LSLL), 186-206 (AEFS…LDLL), 219-239 (AIAI…KFLI), and 247-267 (FTPF…LIYI).

This sequence belongs to the UppP family.

It localises to the cell inner membrane. The catalysed reaction is di-trans,octa-cis-undecaprenyl diphosphate + H2O = di-trans,octa-cis-undecaprenyl phosphate + phosphate + H(+). Its function is as follows. Catalyzes the dephosphorylation of undecaprenyl diphosphate (UPP). Confers resistance to bacitracin. In Caulobacter sp. (strain K31), this protein is Undecaprenyl-diphosphatase.